Consider the following 77-residue polypeptide: Small, acid-soluble spore protein Tlp (77 aa).

It belongs to the Tlp family.

Its subcellular location is the spore core. This chain is Small, acid-soluble spore protein Tlp, found in Geobacillus sp. (strain WCH70).